The primary structure comprises 180 residues: UPF0149 protein XOO1028 (180 aa).

The protein belongs to the UPF0149 family.

The protein is UPF0149 protein XOO1028 of Xanthomonas oryzae pv. oryzae (strain MAFF 311018).